Here is a 1282-residue protein sequence, read N- to C-terminus: Myosin-1 (1282 aa).

Residues 1-30 are disordered; it reads MAISKKAGAKKAGAVSKPPPSKGASSKGGV. The Myosin motor domain maps to 44 to 723; it reads AGVSDMTLLS…TLFALETMRD (680 aa). 137 to 144 is a binding site for ATP; sequence GESGAGKT. Position 365 is a phosphoserine (Ser365). The interval 412–494 is actin-binding; it reads VIGVLDIYGF…PGIFSALNDA (83 aa). The tract at residues 569 to 590 is disordered; that stretch reads LQKLFPDRPDPNSKKRPPTAGD. IQ domains are found at residues 727–747 and 748–773; these read HNMA…KEEC and ARRI…YGHQ. The TH1 domain occupies 781–977; the sequence is RRRFSLLGLR…AVSVCSGEPA (197 aa). The disordered stretch occupies residues 973-1073; that stretch reads SGEPANSVSR…PPPAAVAPSE (101 aa). Positions 1029 to 1058 are enriched in low complexity; sequence PGSGAAGTARPAAAVGSASAGAGVGATRSA. A compositionally biased stretch (pro residues) spans 1059 to 1068; sequence PRPPPPPPAA. Residues 1074–1135 enclose the SH3 domain; it reads PQVARYKALY…PSNYLELIVQ (62 aa). The segment at 1237 to 1282 is disordered; sequence AAAAAAGAGANGKGAGAPPAVAAKPVVAPKPAGSNGRAMPPPPPRR. The span at 1252 to 1269 shows a compositional bias: low complexity; it reads GAPPAVAAKPVVAPKPAG.

This sequence belongs to the TRAFAC class myosin-kinesin ATPase superfamily. Myosin family. Phosphorylation of the TEDS site (Ser-365) is required for the polarization of the actin cytoskeleton. Phosphorylation probably activates the myosin-I ATPase activity.

The protein localises to the cytoplasm. The protein resides in the cytoskeleton. Its subcellular location is the actin patch. Its function is as follows. Type-I myosin implicated in the organization of the actin cytoskeleton. Required for proper actin cytoskeleton polarization. At the cell cortex, assembles in patch-like structures together with proteins from the actin-polymerizing machinery and promotes actin assembly. Functions as actin nucleation-promoting factor (NPF) for the Arp2/3 complex. This chain is Myosin-1 (myo1), found in Mycosarcoma maydis (Corn smut fungus).